A 145-amino-acid chain; its full sequence is Transmembrane protein CCDC163 (145 aa).

A helical transmembrane segment spans residues L38 to L54.

It localises to the membrane. This chain is Transmembrane protein CCDC163, found in Homo sapiens (Human).